Here is a 460-residue protein sequence, read N- to C-terminus: Gastric inhibitory polypeptide receptor (460 aa).

The signal sequence occupies residues 1 to 18 (MPLRLLLLLLWLWGLQWA). Topologically, residues 19–134 (ETDSEGQTTT…DQTLILERLQ (116 aa)) are extracellular. 3 disulfide bridges follow: C42/C66, C57/C99, and C80/C114. N-linked (GlcNAc...) asparagine glycosylation is found at N58, N68, and N73. A helical transmembrane segment spans residues 135–155 (IMYTVGYSLSLTTLLLALLIL). The Cytoplasmic portion of the chain corresponds to 156-166 (SLFRRLHCTRN). Residues 167–185 (YIHMNLFTSFMLRAAAILT) traverse the membrane as a helical segment. Topologically, residues 186–222 (RDQLLPPLGPYTGDQAPTPWNQALAACRTAQIMTQYC) are extracellular. The chain crosses the membrane as a helical span at residues 223-243 (VGANYTWLLVEGVYLHHLLVI). At 244–255 (VGRSEKGHFRCY) the chain is on the cytoplasmic side. Residues 256-276 (LLLGWGAPALFVIPWVIVRYL) traverse the membrane as a helical segment. The Extracellular portion of the chain corresponds to 277–297 (RENTQCWERNEVKAIWWIIRT). A helical membrane pass occupies residues 298–318 (PILITILINFLIFIRILGILV). The Cytoplasmic portion of the chain corresponds to 319-337 (SKLRTRQMRCPDYRLRLAR). Residues 338-358 (STLTLVPLLGVHEVVFAPVTE) form a helical membrane-spanning segment. Topologically, residues 359 to 370 (EQVEGSLRFAKL) are extracellular. A helical transmembrane segment spans residues 371 to 391 (AFEIFLSSFQGFLVSVLYCFI). Residues 392 to 460 (NKEVQSEIRQ…PGDEVLESYC (69 aa)) lie on the Cytoplasmic side of the membrane.

The protein belongs to the G-protein coupled receptor 2 family. In terms of assembly, may form homodimers and heterodimers with GLP1R. In terms of processing, N-glycosylation is required for cell surface expression and lengthens receptor half-life by preventing degradation in the ER.

It localises to the cell membrane. Functionally, this is a receptor for GIP. The activity of this receptor is mediated by G proteins which activate adenylyl cyclase. The polypeptide is Gastric inhibitory polypeptide receptor (Gipr) (Mus musculus (Mouse)).